The sequence spans 260 residues: Lys-63-specific deubiquitinase BRCC36 (260 aa).

An MPN domain is found at 6-149; that stretch reads VHLESDAFLV…YTCFQSVQAQ (144 aa). Residues His-92, His-94, and Asp-105 each coordinate Zn(2+). The JAMM motif signature appears at 92-105; it reads HSHPHITVWPSHVD.

This sequence belongs to the peptidase M67A family. BRCC36 subfamily. Component of the BRCA1-A complex, at least composed of brca1, bard1, uimc1/rap80, abraxas1, brcc3/brcc36, babam2 and babam1/nba1. In the BRCA1-A complex, interacts directly with abraxas1 and babam2. Component of the BRISC complex, at least composed of abraxas2, brcc3/brcc36, babam2 and babam1/nba1. Within the complex, interacts directly with abraxas2. Both the BRCA1-A complex and the BRISC complex bind polyubiquitin. Zn(2+) is required as a cofactor.

The protein localises to the nucleus. Its subcellular location is the cytoplasm. The protein resides in the cytoskeleton. It localises to the spindle pole. Metalloprotease that specifically cleaves 'Lys-63'-linked polyubiquitin chains. Does not have activity toward 'Lys-48'-linked polyubiquitin chains. Component of the BRCA1-A complex, a complex that specifically recognizes 'Lys-63'-linked ubiquitinated histones H2A and H2AX at DNA lesions sites, leading to target the brca1-bard1 heterodimer to sites of DNA damage at double-strand breaks (DSBs). In the BRCA1-A complex, it specifically removes 'Lys-63'-linked ubiquitin on histones H2A and H2AX, antagonizing the rnf8-dependent ubiquitination at double-strand breaks (DSBs). Catalytic subunit of the BRISC complex, a multiprotein complex that specifically cleaves 'Lys-63'-linked ubiquitin in various substrates. Mediates the specific 'Lys-63'-specific deubiquitination associated with the COP9 signalosome complex (CSN), via the interaction of the BRISC complex with the CSN complex. The BRISC complex is required for normal mitotic spindle assembly and microtubule attachment to kinetochores via its role in deubiquitinating numa1. Plays a role in interferon signaling via its role in the deubiquitination of the interferon receptor ifnar1; deubiquitination increases ifnar1 activity by enhancing its stability and cell surface expression. Acts as a regulator of the NLRP3 inflammasome by mediating deubiquitination of nlrp3. Down-regulates the response to bacterial lipopolysaccharide (LPS) via its role in ifnar1 deubiquitination. This is Lys-63-specific deubiquitinase BRCC36 (brcc3) from Salmo salar (Atlantic salmon).